Consider the following 409-residue polypeptide: Glycosaminoglycan xylosylkinase (409 aa).

Over 1–6 (MKLKQR) the chain is Cytoplasmic. Residues 7–25 (VVLLAILLVIFIFTKVFLI) traverse the membrane as a helical; Signal-anchor for type II membrane protein segment. At 26–409 (DNLDTSAANR…VEDRMPLSHL (384 aa)) the chain is on the lumenal side. 2 residues coordinate ATP: glutamine 107 and lysine 123. A Mn(2+)-binding site is contributed by aspartate 142. N-linked (GlcNAc...) asparagine glycosylation is present at asparagine 193. Intrachain disulfides connect cysteine 196–cysteine 211 and cysteine 201–cysteine 204. 222–225 (TLWL) provides a ligand contact to ATP. Intrachain disulfides connect cysteine 257-cysteine 331 and cysteine 332-cysteine 389. Aspartate 289 is a catalytic residue. The ATP site is built by glutamate 294 and aspartate 309. Aspartate 309 provides a ligand contact to Mn(2+).

It belongs to the FAM20 family. It depends on Mn(2+) as a cofactor. As to expression, widely expressed. Strongly expressed in pancreas, spleen and fetal liver.

The protein resides in the golgi apparatus membrane. It carries out the reaction 3-O-(beta-D-galactosyl-(1-&gt;3)-beta-D-galactosyl-(1-&gt;4)-beta-D-xylosyl)-L-seryl-[protein] + ATP = 3-O-(beta-D-galactosyl-(1-&gt;3)-beta-D-galactosyl-(1-&gt;4)-beta-D-2-O-phosphoxylosyl)-L-seryl-[protein] + ADP + H(+). Functionally, responsible for the 2-O-phosphorylation of xylose in the glycosaminoglycan-protein linkage region of proteoglycans thereby regulating the amount of mature GAG chains. Sulfated glycosaminoglycans (GAGs), including heparan sulfate and chondroitin sulfate, are synthesized on the so-called common GAG-protein linkage region (GlcUAbeta1-3Galbeta1-3Galbeta1-4Xylbeta1-O-Ser) of core proteins, which is formed by the stepwise addition of monosaccharide residues by the respective specific glycosyltransferases. Xylose 2-O-phosphorylation may influence the catalytic activity of B3GAT3 (GlcAT-I) which completes the precursor tetrasaccharide of GAG-protein linkage regions on which the repeating disaccharide region is synthesized. The polypeptide is Glycosaminoglycan xylosylkinase (Homo sapiens (Human)).